The chain runs to 497 residues: Glycerol kinase (497 aa).

Residue Thr13 participates in ADP binding. ATP contacts are provided by Thr13, Thr14, and Ser15. Thr13 provides a ligand contact to sn-glycerol 3-phosphate. Arg17 lines the ADP pocket. Arg83, Glu84, and Tyr135 together coordinate sn-glycerol 3-phosphate. Positions 83, 84, and 135 each coordinate glycerol. Phosphohistidine; by HPr is present on His231. Residue Asp245 coordinates sn-glycerol 3-phosphate. Glycerol contacts are provided by Asp245 and Gln246. ADP contacts are provided by Thr267 and Gly310. Positions 267, 310, 314, and 411 each coordinate ATP. The ADP site is built by Gly411 and Asn415.

Belongs to the FGGY kinase family. In terms of assembly, homotetramer and homodimer (in equilibrium). Post-translationally, the phosphoenolpyruvate-dependent sugar phosphotransferase system (PTS), including enzyme I, and histidine-containing protein (HPr) are required for the phosphorylation, which leads to the activation of the enzyme.

The catalysed reaction is glycerol + ATP = sn-glycerol 3-phosphate + ADP + H(+). It functions in the pathway polyol metabolism; glycerol degradation via glycerol kinase pathway; sn-glycerol 3-phosphate from glycerol: step 1/1. With respect to regulation, activated by phosphorylation and inhibited by fructose 1,6-bisphosphate (FBP). Functionally, key enzyme in the regulation of glycerol uptake and metabolism. Catalyzes the phosphorylation of glycerol to yield sn-glycerol 3-phosphate. In Listeria monocytogenes serovar 1/2a (strain ATCC BAA-679 / EGD-e), this protein is Glycerol kinase.